Reading from the N-terminus, the 364-residue chain is Phosphoserine aminotransferase (364 aa).

Residue Arg42 participates in L-glutamate binding. Pyridoxal 5'-phosphate is bound by residues 76 to 77 (GR), Trp102, Thr156, Asp175, and Gln198. Lys199 bears the N6-(pyridoxal phosphate)lysine mark. 240–241 (NT) serves as a coordination point for pyridoxal 5'-phosphate.

This sequence belongs to the class-V pyridoxal-phosphate-dependent aminotransferase family. SerC subfamily. Homodimer. Pyridoxal 5'-phosphate is required as a cofactor.

It is found in the cytoplasm. It carries out the reaction O-phospho-L-serine + 2-oxoglutarate = 3-phosphooxypyruvate + L-glutamate. The enzyme catalyses 4-(phosphooxy)-L-threonine + 2-oxoglutarate = (R)-3-hydroxy-2-oxo-4-phosphooxybutanoate + L-glutamate. It functions in the pathway amino-acid biosynthesis; L-serine biosynthesis; L-serine from 3-phospho-D-glycerate: step 2/3. Its pathway is cofactor biosynthesis; pyridoxine 5'-phosphate biosynthesis; pyridoxine 5'-phosphate from D-erythrose 4-phosphate: step 3/5. In terms of biological role, catalyzes the reversible conversion of 3-phosphohydroxypyruvate to phosphoserine and of 3-hydroxy-2-oxo-4-phosphonooxybutanoate to phosphohydroxythreonine. In Shewanella sediminis (strain HAW-EB3), this protein is Phosphoserine aminotransferase.